Here is a 432-residue protein sequence, read N- to C-terminus: Adenosylhomocysteinase (432 aa).

An N-acetylserine modification is found at S2. Substrate is bound by residues T57, D131, and E156. An NAD(+)-binding site is contributed by 157–159; that stretch reads TTT. S183 carries the phosphoserine modification. Substrate-binding residues include K186 and D190. Residue K186 is modified to N6-(2-hydroxyisobutyryl)lysine. A Phosphotyrosine modification is found at Y193. Residues 222–227, E243, N248, 299–301, N346, and H353 contribute to the NAD(+) site; these read GDVGKG and IGH.

It belongs to the adenosylhomocysteinase family. As to quaternary structure, homotetramer. Interaction with AHCYL1. NAD(+) is required as a cofactor.

It localises to the cytoplasm. Its subcellular location is the melanosome. It is found in the nucleus. The protein localises to the endoplasmic reticulum. It carries out the reaction S-adenosyl-L-homocysteine + H2O = L-homocysteine + adenosine. It participates in amino-acid biosynthesis; L-homocysteine biosynthesis; L-homocysteine from S-adenosyl-L-homocysteine: step 1/1. Functionally, catalyzes the hydrolysis of S-adenosyl-L-homocysteine to form adenosine and homocysteine. Binds copper ions. This chain is Adenosylhomocysteinase (AHCY), found in Homo sapiens (Human).